We begin with the raw amino-acid sequence, 345 residues long: MTDKTSLSYKDAGVDIDAGNALVGRIKGVVKKTRRPEVMGGLGGFGALCALPQKYREPVLVSGTDGVGTKLRLAMDLKRHDTIGIDLVAMCVNDLVVQGAEPLFFLDYYATGKLDVDTASAVISGIAEGCLQSGCSLVGGETAEMPGMYHGEDYDVAGFCVGVVEKSEIIDGSKVSDGDVLIALGSSGPHSNGYSLVRKILEVSGCDPQTTELDGKPLADHLLAPTRIYVKSVLELIEKVDVHAIAHLTGGGFWENIPRVLPDNTQAVIDESSWQWPEVFNWLQTAGNVERHEMYRTFNCGVGMIIALPAPEVDKALALLNANGENAWKIGIIKASDSEQRVVIE.

This sequence belongs to the AIR synthase family.

The protein localises to the cytoplasm. The enzyme catalyses 2-formamido-N(1)-(5-O-phospho-beta-D-ribosyl)acetamidine + ATP = 5-amino-1-(5-phospho-beta-D-ribosyl)imidazole + ADP + phosphate + H(+). It participates in purine metabolism; IMP biosynthesis via de novo pathway; 5-amino-1-(5-phospho-D-ribosyl)imidazole from N(2)-formyl-N(1)-(5-phospho-D-ribosyl)glycinamide: step 2/2. The chain is Phosphoribosylformylglycinamidine cyclo-ligase from Escherichia coli (strain 55989 / EAEC).